Here is a 319-residue protein sequence, read N- to C-terminus: ATP-dependent 6-phosphofructokinase (319 aa).

Gly-11 contributes to the ATP binding site. 21-25 lines the ADP pocket; it reads RAVVR. Residues 72 to 73 and 102 to 105 contribute to the ATP site; these read RC and GDGS. Asp-103 provides a ligand contact to Mg(2+). Residue 125-127 participates in substrate binding; it reads TID. The active-site Proton acceptor is the Asp-127. Position 154 (Arg-154) interacts with ADP. Substrate-binding positions include Arg-162 and 169–171; that span reads MGR. Residues 185 to 187, Arg-211, and 213 to 215 contribute to the ADP site; these read GAE and KKH. Substrate is bound by residues Glu-222, Arg-243, and 249–252; that span reads HIQR.

Belongs to the phosphofructokinase type A (PFKA) family. ATP-dependent PFK group I subfamily. Prokaryotic clade 'B1' sub-subfamily. In terms of assembly, homotetramer. Component of a possible RNA degradosome complex composed of rny, rnjA, rnjB, pnp, pfkA and eno (although rnjA and rnjB's presence is unclear). Specifically interacts with RNase Y (rny, PubMed:21803996) and enolase (eno, PubMed:22198292). Interacts with BrxC. It depends on Mg(2+) as a cofactor.

The protein localises to the cytoplasm. The catalysed reaction is beta-D-fructose 6-phosphate + ATP = beta-D-fructose 1,6-bisphosphate + ADP + H(+). The protein operates within carbohydrate degradation; glycolysis; D-glyceraldehyde 3-phosphate and glycerone phosphate from D-glucose: step 3/4. Its activity is regulated as follows. Allosterically activated by ADP and other diphosphonucleosides, and allosterically inhibited by phosphoenolpyruvate. In terms of biological role, catalyzes the phosphorylation of D-fructose 6-phosphate to fructose 1,6-bisphosphate by ATP, the first committing step of glycolysis. The chain is ATP-dependent 6-phosphofructokinase from Bacillus subtilis (strain 168).